Reading from the N-terminus, the 320-residue chain is tRNA pseudouridine synthase B (320 aa).

The Nucleophile role is filled by Asp-49.

Belongs to the pseudouridine synthase TruB family. Type 1 subfamily.

The enzyme catalyses uridine(55) in tRNA = pseudouridine(55) in tRNA. In terms of biological role, responsible for synthesis of pseudouridine from uracil-55 in the psi GC loop of transfer RNAs. In Bartonella bacilliformis (strain ATCC 35685 / KC583 / Herrer 020/F12,63), this protein is tRNA pseudouridine synthase B.